A 365-amino-acid polypeptide reads, in one-letter code: Holliday junction branch migration complex subunit RuvB (365 aa).

A large ATPase domain (RuvB-L) region spans residues 1–191; that stretch reads MNFDPIDDFD…FGFTAHMDFY (191 aa). Residues L30, R31, G72, K75, T76, S77, 138 to 140, R181, Y191, and R228 contribute to the ATP site; that span reads EDF. T76 is a Mg(2+) binding site. The tract at residues 192–262 is small ATPAse domain (RuvB-S); sequence EPEELQQILM…VAQAALAVYD (71 aa). The interval 265-365 is head domain (RuvB-H); sequence QLGLDRLDRS…QATLFDPNGE (101 aa). Positions 320 and 325 each coordinate DNA.

Belongs to the RuvB family. In terms of assembly, homohexamer. Forms an RuvA(8)-RuvB(12)-Holliday junction (HJ) complex. HJ DNA is sandwiched between 2 RuvA tetramers; dsDNA enters through RuvA and exits via RuvB. An RuvB hexamer assembles on each DNA strand where it exits the tetramer. Each RuvB hexamer is contacted by two RuvA subunits (via domain III) on 2 adjacent RuvB subunits; this complex drives branch migration. In the full resolvosome a probable DNA-RuvA(4)-RuvB(12)-RuvC(2) complex forms which resolves the HJ.

The protein localises to the cytoplasm. The catalysed reaction is ATP + H2O = ADP + phosphate + H(+). The RuvA-RuvB-RuvC complex processes Holliday junction (HJ) DNA during genetic recombination and DNA repair, while the RuvA-RuvB complex plays an important role in the rescue of blocked DNA replication forks via replication fork reversal (RFR). RuvA specifically binds to HJ cruciform DNA, conferring on it an open structure. The RuvB hexamer acts as an ATP-dependent pump, pulling dsDNA into and through the RuvAB complex. RuvB forms 2 homohexamers on either side of HJ DNA bound by 1 or 2 RuvA tetramers; 4 subunits per hexamer contact DNA at a time. Coordinated motions by a converter formed by DNA-disengaged RuvB subunits stimulates ATP hydrolysis and nucleotide exchange. Immobilization of the converter enables RuvB to convert the ATP-contained energy into a lever motion, pulling 2 nucleotides of DNA out of the RuvA tetramer per ATP hydrolyzed, thus driving DNA branch migration. The RuvB motors rotate together with the DNA substrate, which together with the progressing nucleotide cycle form the mechanistic basis for DNA recombination by continuous HJ branch migration. Branch migration allows RuvC to scan DNA until it finds its consensus sequence, where it cleaves and resolves cruciform DNA. In Rhodococcus erythropolis (strain PR4 / NBRC 100887), this protein is Holliday junction branch migration complex subunit RuvB.